A 640-amino-acid polypeptide reads, in one-letter code: Threonine--tRNA ligase (640 aa).

Residues 1–63 (MSSVTVTLPD…SEDCEIEIVT (63 aa)) enclose the TGS domain. Residues 242 to 533 (DHRKLGREMD…LIEHYNGRFP (292 aa)) are catalytic. The Zn(2+) site is built by C334, H385, and H510.

The protein belongs to the class-II aminoacyl-tRNA synthetase family. Homodimer. Requires Zn(2+) as cofactor.

The protein localises to the cytoplasm. The enzyme catalyses tRNA(Thr) + L-threonine + ATP = L-threonyl-tRNA(Thr) + AMP + diphosphate + H(+). Catalyzes the attachment of threonine to tRNA(Thr) in a two-step reaction: L-threonine is first activated by ATP to form Thr-AMP and then transferred to the acceptor end of tRNA(Thr). The chain is Threonine--tRNA ligase from Halobacterium salinarum (strain ATCC 29341 / DSM 671 / R1).